Here is a 348-residue protein sequence, read N- to C-terminus: RNA 3'-terminal phosphate cyclase (348 aa).

ATP-binding positions include Gln102 and 285 to 288; that span reads HMGD. His311 acts as the Tele-AMP-histidine intermediate in catalysis.

Belongs to the RNA 3'-terminal cyclase family. Type 1 subfamily.

The protein localises to the cytoplasm. It carries out the reaction a 3'-end 3'-phospho-ribonucleotide-RNA + ATP = a 3'-end 2',3'-cyclophospho-ribonucleotide-RNA + AMP + diphosphate. Functionally, catalyzes the conversion of 3'-phosphate to a 2',3'-cyclic phosphodiester at the end of RNA. The mechanism of action of the enzyme occurs in 3 steps: (A) adenylation of the enzyme by ATP; (B) transfer of adenylate to an RNA-N3'P to produce RNA-N3'PP5'A; (C) and attack of the adjacent 2'-hydroxyl on the 3'-phosphorus in the diester linkage to produce the cyclic end product. The biological role of this enzyme is unknown but it is likely to function in some aspects of cellular RNA processing. This Korarchaeum cryptofilum (strain OPF8) protein is RNA 3'-terminal phosphate cyclase.